Consider the following 170-residue polypeptide: UPF0161 protein At3g09310 (170 aa).

Disordered stretches follow at residues Cys49 to Leu70 and Ser147 to Ile170. Residues Gly154–Ile170 are compositionally biased toward acidic residues.

This sequence belongs to the UPF0161 family.

This Arabidopsis thaliana (Mouse-ear cress) protein is UPF0161 protein At3g09310.